A 174-amino-acid polypeptide reads, in one-letter code: Large ribosomal subunit protein uL10 (174 aa).

Belongs to the universal ribosomal protein uL10 family. Part of the ribosomal stalk of the 50S ribosomal subunit. The N-terminus interacts with L11 and the large rRNA to form the base of the stalk. The C-terminus forms an elongated spine to which L12 dimers bind in a sequential fashion forming a multimeric L10(L12)X complex.

Functionally, forms part of the ribosomal stalk, playing a central role in the interaction of the ribosome with GTP-bound translation factors. The sequence is that of Large ribosomal subunit protein uL10 from Verminephrobacter eiseniae (strain EF01-2).